Reading from the N-terminus, the 589-residue chain is Aspartate--tRNA ligase (589 aa).

E175 contributes to the L-aspartate binding site. The tract at residues 199-202 is aspartate; that stretch reads QIFK. Residue R221 coordinates L-aspartate. ATP-binding positions include 221-223 and Q230; that span reads RDE. H449 lines the L-aspartate pocket. An ATP-binding site is contributed by E483. Residue R490 coordinates L-aspartate. Residue 535–538 participates in ATP binding; that stretch reads GLDR.

This sequence belongs to the class-II aminoacyl-tRNA synthetase family. Type 1 subfamily. In terms of assembly, homodimer.

The protein localises to the cytoplasm. The catalysed reaction is tRNA(Asp) + L-aspartate + ATP = L-aspartyl-tRNA(Asp) + AMP + diphosphate. Functionally, catalyzes the attachment of L-aspartate to tRNA(Asp) in a two-step reaction: L-aspartate is first activated by ATP to form Asp-AMP and then transferred to the acceptor end of tRNA(Asp). This is Aspartate--tRNA ligase from Shouchella clausii (strain KSM-K16) (Alkalihalobacillus clausii).